The following is a 376-amino-acid chain: Peroxisomal targeting signal 2 receptor (376 aa).

WD repeat units lie at residues Asp58–Met98, Glu102–Leu142, Asp182–Met222, Ala226–His267, Gly279–Val319, and Ala339–Gln376.

It belongs to the WD repeat peroxin-7 family. In terms of assembly, interacts with PEX20. Polyubiquitinated, leading to its degradation by the proteasome. Ubiquitination is dependent of PEX5 and PEX20 and takes place following recycling into the cytosol.

Its subcellular location is the cytoplasm. The protein localises to the cytosol. It is found in the peroxisome matrix. Receptor required for the peroxisomal import of proteins containing a C-terminal PTS2-type peroxisomal targeting signal, such as 3-oxoacyl-CoA thiolase. Specifically binds to cargo proteins containing a PTS2 peroxisomal targeting signal in the cytosol. Cargo protein-binding triggers interaction with PEX20 and formation of a ternary complex composed of PEX20 and PEX7 along with PTS2-containing cargo proteins, which is tranlocated into peroxisomes by passing through the peroxisomal docking complex. PEX7 receptor is then retrotranslocated into the cytosol, where it is ubiquitinated and degraded. The protein is Peroxisomal targeting signal 2 receptor of Komagataella phaffii (strain GS115 / ATCC 20864) (Yeast).